A 208-amino-acid polypeptide reads, in one-letter code: Transmembrane protein 222 (208 aa).

Residues 1–26 form a disordered region; the sequence is MAEAEGSSLLLLPPPPPPPRMAEVEA. Residues 1–55 lie on the Extracellular side of the membrane; it reads MAEAEGSSLLLLPPPPPPPRMAEVEAPTAAETDMKQYQGSGGVAMDVERSRFPYC. A helical transmembrane segment spans residues 56 to 76; sequence VVWTPIPVLTWFFPIIGHMGI. The Cytoplasmic segment spans residues 77-164; it reads CTSTGVIRDF…MRYNNSTNWN (88 aa). Residues 165–185 traverse the membrane as a helical segment; sequence MVTLCFFCLLYGKYVSVGAFV. Position 186 (Lys-186) is a topological domain, extracellular. Residues 187–207 traverse the membrane as a helical segment; sequence TWLPFILLLGIILTVSLVFNL. A topological domain (cytoplasmic) is located at residue Arg-208.

In terms of tissue distribution, widely expressed. The highest expression is observed in the brain.

It localises to the membrane. The protein localises to the cell projection. Its subcellular location is the dendrite. This is Transmembrane protein 222 (TMEM222) from Homo sapiens (Human).